A 520-amino-acid chain; its full sequence is MTEISILNDVQKIIVLDYGSQYNQLIARRIREFGVFSELKSHKITAQELREINPIGIVLSGGPNSVYADNAFGIDPEIFELGIPILGICYGMQLITHKLGGKVVPAGQAGNREYGQSTLHLRETSKLFSGTPQEQLVLMSHGDAVTEIPEGFHLVGDSNDCPYAAIENTEKNLYGIQFHPEVRHSVYGNDILKNFAISICGARGDWSMDNFIDMEIAKIRETVGDRKVLLGLSGGVDSSVVGVLLQKAIGDQLTCIFVDHGLLRKDEGDQVMGMLGGKFGLNIIRVDASKRFLDLLADVEDPEKKRKIIGNEFVYVFDDEASKLKGVDFLAQGTLYTDIIESGTETAQTIKSHHNVGGLPEDMQFELIEPLNTLFKDEVRALGIALGMPEEIVWRQPFPGPGLAIRVMGPITEEKLETVRESDAILREEIAKAGLDRDVWQYFTVNTGVRSVGVMGDGRTYDYTIAIRAITSIDGMTADFAQLPWDVLKKISTRIVNEVDHVNRIVYDITSKPPATVEWE.

The Glutamine amidotransferase type-1 domain maps to 12–205; sequence KIIVLDYGSQ…AISICGARGD (194 aa). Cysteine 89 acts as the Nucleophile in catalysis. Active-site residues include histidine 179 and glutamate 181. A GMPS ATP-PPase domain is found at 206–395; it reads WSMDNFIDME…LGMPEEIVWR (190 aa). Position 233–239 (233–239) interacts with ATP; it reads SGGVDSS.

In terms of assembly, homodimer.

It catalyses the reaction XMP + L-glutamine + ATP + H2O = GMP + L-glutamate + AMP + diphosphate + 2 H(+). The protein operates within purine metabolism; GMP biosynthesis; GMP from XMP (L-Gln route): step 1/1. Catalyzes the synthesis of GMP from XMP. The polypeptide is GMP synthase [glutamine-hydrolyzing] (Streptococcus pyogenes serotype M6 (strain ATCC BAA-946 / MGAS10394)).